The chain runs to 422 residues: Protein phosphatase 1 regulatory subunit 36 (422 aa).

As to quaternary structure, interacts with PPP1CA.

Its function is as follows. Inhibits phosphatase activity of protein phosphatase 1 (PP1) complexes. In Homo sapiens (Human), this protein is Protein phosphatase 1 regulatory subunit 36 (PPP1R36).